A 332-amino-acid chain; its full sequence is Probable allantoicase (332 aa).

This sequence belongs to the allantoicase family.

It carries out the reaction allantoate + H2O = (S)-ureidoglycolate + urea. It participates in nitrogen metabolism; (S)-allantoin degradation; (S)-ureidoglycolate from allantoate (aminidohydrolase route): step 1/1. The sequence is that of Probable allantoicase from Pseudomonas aeruginosa (strain UCBPP-PA14).